Reading from the N-terminus, the 494-residue chain is Casein kinase I homolog HRR25 (494 aa).

The Protein kinase domain maps to 9–278; sequence FRIGRKIGSG…LARLFKDLSI (270 aa). ATP-binding positions include 15 to 23 and lysine 38; that span reads IGSGSFGDI. Catalysis depends on aspartate 128, which acts as the Proton acceptor. Serine 143 carries the post-translational modification Phosphoserine. The disordered stretch occupies residues 394–494; the sequence is RQQQPQQQVQ…DKPAGQSIWL (101 aa). Low complexity-rich tracts occupy residues 395–418 and 432–444; these read QQQPQQQVQSSQPQPQPQQLQQQP and QQQQRDSQEQQQQ. A compositionally biased stretch (polar residues) spans 445-479; it reads VPMATTRATQYPPQINSNNFNTNQASVPPQMRSNP.

This sequence belongs to the protein kinase superfamily. CK1 Ser/Thr protein kinase family. Casein kinase I subfamily. As to quaternary structure, interacts with HRI1. Interacts with ELP1/IKI3; the interaction leads to ELP1/IKI3 phosphorylation.

Its subcellular location is the cytoplasm. It localises to the nucleus. It is found in the nucleolus. The protein localises to the nucleoplasm. It carries out the reaction L-seryl-[protein] + ATP = O-phospho-L-seryl-[protein] + ADP + H(+). The catalysed reaction is L-threonyl-[protein] + ATP = O-phospho-L-threonyl-[protein] + ADP + H(+). Functionally, protein kinase which phosphorylates serine and threonine residues. Can use casein as a substrate. Phosphorylates elongator complex member ELP1/IKI3 on 'Ser-1198' and 'Ser-1202' which promotes the tRNA modification function of the complex. Associated with repair of damaged DNA and meiosis. This chain is Casein kinase I homolog HRR25 (HRR25), found in Saccharomyces cerevisiae (strain ATCC 204508 / S288c) (Baker's yeast).